An 81-amino-acid chain; its full sequence is MKVEILHKTPKGFLIARGKREIKIGSVVIFKNKKIGKVVDIFGPVAKPYIKILPINKDIEVSGTAYIKNDKSKYKNTEKKN.

It to M.thermoautotrophicum MTH886.

This is an uncharacterized protein from Methanocaldococcus jannaschii (strain ATCC 43067 / DSM 2661 / JAL-1 / JCM 10045 / NBRC 100440) (Methanococcus jannaschii).